A 259-amino-acid polypeptide reads, in one-letter code: Bidirectional sugar transporter SWEET6a (259 aa).

Residues 1-9 lie on the Extracellular side of the membrane; that stretch reads MISPDAARN. The helical transmembrane segment at 10–30 threads the bilayer; that stretch reads VVGIIGNVISFGLFLAPVPTF. Residues 10-98 form the MtN3/slv 1 domain; the sequence is VVGIIGNVIS…IFFLYSPNKK (89 aa). At 31–45 the chain is on the cytoplasmic side; it reads WRICKRKDVEEFKAD. Residues 46–66 form a helical membrane-spanning segment; the sequence is PYLATLLNCMLWVFYGIPVVH. The Extracellular segment spans residues 67–69; the sequence is PNS. The helical transmembrane segment at 70–90 threads the bilayer; it reads ILVVTINGIGLLVEGTYLLIF. The Cytoplasmic segment spans residues 91–103; sequence FLYSPNKKRLRMC. A helical transmembrane segment spans residues 104–124; that stretch reads AVLGVELVFMLAVILGVLLGA. Topologically, residues 125–131 are extracellular; sequence HTHEKRS. Residues 132–152 form a helical membrane-spanning segment; the sequence is MIVGILCVFFGSIMYFSPLTI. Residues 133 to 216 enclose the MtN3/slv 2 domain; it reads IVGILCVFFG…LILYACYYRT (84 aa). At 153-165 the chain is on the cytoplasmic side; sequence MGKVIKTKSVEYM. The chain crosses the membrane as a helical span at residues 166–186; that stretch reads PFFLSLVCFLNGVCWTAYALI. The Extracellular segment spans residues 187 to 189; it reads RFD. A helical transmembrane segment spans residues 190–210; it reads IYVTIPNGLGALFGAIQLILY. Over 211 to 259 the chain is Cytoplasmic; that stretch reads ACYYRTTPKKTKAAKDVEMPSVVVSGTGAAAAAGGGNTGGGSISVTVER.

This sequence belongs to the SWEET sugar transporter family. Forms homooligomers and/or heterooligomers.

The protein resides in the cell membrane. Functionally, mediates both low-affinity uptake and efflux of sugar across the plasma membrane. The polypeptide is Bidirectional sugar transporter SWEET6a (SWEET6A) (Oryza sativa subsp. indica (Rice)).